A 788-amino-acid chain; its full sequence is Response regulator SSK1 (788 aa).

Residues 534 to 691 form the Response regulatory domain; the sequence is NVLIVEDNII…WLERKVKEWG (158 aa). Asp-583 carries the 4-aspartylphosphate modification.

This sequence belongs to the SSK1 family.

The protein localises to the cytoplasm. Two-domain response regulator protein in the two-component signal transduction system of the HOG1 pathway. Controls high-osmolarity adaptation and fungicide sensitivity via its regulation of the phosphorylation of HOG1. The protein is Response regulator SSK1 of Cochliobolus heterostrophus (strain C5 / ATCC 48332 / race O) (Southern corn leaf blight fungus).